Reading from the N-terminus, the 334-residue chain is uncharacterized protein (334 aa).

5 WD repeats span residues 56 to 86 (LKGEAIIQIHYSQDGNYLLSTATDGLAKLWT), 98 to 128 (KPVAMIFNGAFSRDGKAIITAGYNGVARIWD), 139 to 169 (GHTSAVTDVVFLSDDMGVVTSSDDGTIEGWS), 220 to 250 (TDQGRLNDVDFSQDGKLLVTAGFDGTARVFN), and 262 to 291 (LDDGWVTGVAINQDNLIATVSDDGILRVWN).

This is an uncharacterized protein from Synechocystis sp. (strain ATCC 27184 / PCC 6803 / Kazusa).